Reading from the N-terminus, the 105-residue chain is UPF0145 protein (105 aa).

It belongs to the UPF0145 family.

The protein is UPF0145 protein of Enterococcus faecalis (Streptococcus faecalis).